A 227-amino-acid chain; its full sequence is ATP-dependent dethiobiotin synthetase BioD (227 aa).

An ATP-binding site is contributed by 13–18; it reads NIGKTI. Position 17 (Thr-17) interacts with Mg(2+). Lys-38 is an active-site residue. Ser-42 is a substrate binding site. ATP contacts are provided by residues Asp-55, 117–120, 177–178, 206–208, and Asn-213; these read EGFG, NH, and PFI. Mg(2+) contacts are provided by Asp-55 and Glu-117.

It belongs to the dethiobiotin synthetase family. In terms of assembly, homodimer. Mg(2+) serves as cofactor.

Its subcellular location is the cytoplasm. It carries out the reaction (7R,8S)-7,8-diammoniononanoate + CO2 + ATP = (4R,5S)-dethiobiotin + ADP + phosphate + 3 H(+). The protein operates within cofactor biosynthesis; biotin biosynthesis; biotin from 7,8-diaminononanoate: step 1/2. Catalyzes a mechanistically unusual reaction, the ATP-dependent insertion of CO2 between the N7 and N8 nitrogen atoms of 7,8-diaminopelargonic acid (DAPA, also called 7,8-diammoniononanoate) to form a ureido ring. The chain is ATP-dependent dethiobiotin synthetase BioD from Wigglesworthia glossinidia brevipalpis.